The sequence spans 136 residues: Large ribosomal subunit protein eL27 (136 aa).

The KOW domain occupies Met-5 to His-40. An N6-acetyllysine mark is found at Lys-27 and Lys-93.

The protein belongs to the eukaryotic ribosomal protein eL27 family. In terms of assembly, component of the large ribosomal subunit. Interacts with RRP1B. Component of the large ribosomal subunit. Interacts with RRP1B. Interacts with DHX33.

The protein localises to the cytoplasm. The protein resides in the cytosol. It localises to the rough endoplasmic reticulum. Its function is as follows. Component of the large ribosomal subunit. Required for proper rRNA processing and maturation of 28S and 5.8S rRNAs. The chain is Large ribosomal subunit protein eL27 (RPL27) from Canis lupus familiaris (Dog).